We begin with the raw amino-acid sequence, 569 residues long: Thiol:disulfide interchange protein DsbD (569 aa).

Positions 1–19 are cleaved as a signal peptide; sequence MAQRILTLILLLCSTSAFA. Intrachain disulfides connect cysteine 122–cysteine 128 and cysteine 187–cysteine 309. The next 7 membrane-spanning stretches (helical) occupy residues 168–188, 213–233, 248–268, 301–321, 328–348, 362–382, and 391–411; these read LPFS…TPCV, LLTF…GLVV, YVLI…FGLF, IAGL…LLYI, WLGG…LILI, WMEH…VFLL, and GLRL…ITSL. Residues 430–569 enclose the Thioredoxin domain; sequence LVSVRPLQDW…FSAHLRDRQP (140 aa). Cysteine 484 and cysteine 487 are oxidised to a cystine.

This sequence belongs to the thioredoxin family. DsbD subfamily.

It localises to the cell inner membrane. The enzyme catalyses [protein]-dithiol + NAD(+) = [protein]-disulfide + NADH + H(+). It carries out the reaction [protein]-dithiol + NADP(+) = [protein]-disulfide + NADPH + H(+). Functionally, required to facilitate the formation of correct disulfide bonds in some periplasmic proteins and for the assembly of the periplasmic c-type cytochromes. Acts by transferring electrons from cytoplasmic thioredoxin to the periplasm. This transfer involves a cascade of disulfide bond formation and reduction steps. The sequence is that of Thiol:disulfide interchange protein DsbD from Citrobacter koseri (strain ATCC BAA-895 / CDC 4225-83 / SGSC4696).